A 468-amino-acid chain; its full sequence is 3-isopropylmalate dehydratase large subunit (468 aa).

Residues Cys-347, Cys-407, and Cys-410 each coordinate [4Fe-4S] cluster.

This sequence belongs to the aconitase/IPM isomerase family. LeuC type 1 subfamily. Heterodimer of LeuC and LeuD. It depends on [4Fe-4S] cluster as a cofactor.

It catalyses the reaction (2R,3S)-3-isopropylmalate = (2S)-2-isopropylmalate. It functions in the pathway amino-acid biosynthesis; L-leucine biosynthesis; L-leucine from 3-methyl-2-oxobutanoate: step 2/4. Catalyzes the isomerization between 2-isopropylmalate and 3-isopropylmalate, via the formation of 2-isopropylmaleate. This Glaesserella parasuis serovar 5 (strain SH0165) (Haemophilus parasuis) protein is 3-isopropylmalate dehydratase large subunit.